Reading from the N-terminus, the 900-residue chain is DNA mismatch repair protein MutS (900 aa).

637-644 (GPNMAGKS) is a binding site for ATP.

This sequence belongs to the DNA mismatch repair MutS family.

Its function is as follows. This protein is involved in the repair of mismatches in DNA. It is possible that it carries out the mismatch recognition step. This protein has a weak ATPase activity. The sequence is that of DNA mismatch repair protein MutS from Methanosarcina barkeri (strain Fusaro / DSM 804).